A 126-amino-acid polypeptide reads, in one-letter code: Major sperm protein 3 (126 aa).

Ala2 is modified (N-acetylalanine). Positions 8–125 (DIATMPAQKV…RRKNLPIEYN (118 aa)) constitute an MSP domain.

In terms of tissue distribution, sperm.

The protein localises to the cell projection. The protein resides in the pseudopodium. It localises to the cytoplasm. Its subcellular location is the cytoskeleton. Central component in molecular interactions underlying sperm crawling. Forms an extensive filament system that extends from sperm villipoda, along the leading edge of the pseudopod. This is Major sperm protein 3 (MSP-3) from Globodera rostochiensis (Golden nematode worm).